Consider the following 119-residue polypeptide: Large ribosomal subunit protein uL18 (119 aa).

It belongs to the universal ribosomal protein uL18 family. Part of the 50S ribosomal subunit; part of the 5S rRNA/L5/L18/L25 subcomplex. Contacts the 5S and 23S rRNAs.

In terms of biological role, this is one of the proteins that bind and probably mediate the attachment of the 5S RNA into the large ribosomal subunit, where it forms part of the central protuberance. The protein is Large ribosomal subunit protein uL18 of Mycoplasmoides gallisepticum (strain R(low / passage 15 / clone 2)) (Mycoplasma gallisepticum).